The sequence spans 213 residues: Orotate phosphoribosyltransferase (213 aa).

K26 lines the 5-phospho-alpha-D-ribose 1-diphosphate pocket. 34 to 35 (FF) provides a ligand contact to orotate. Residues 72 to 73 (YK), R99, K100, K103, H105, and 124 to 132 (DDVITAGTA) each bind 5-phospho-alpha-D-ribose 1-diphosphate. Orotate-binding residues include T128 and R156.

The protein belongs to the purine/pyrimidine phosphoribosyltransferase family. PyrE subfamily. Homodimer. Requires Mg(2+) as cofactor.

The catalysed reaction is orotidine 5'-phosphate + diphosphate = orotate + 5-phospho-alpha-D-ribose 1-diphosphate. It functions in the pathway pyrimidine metabolism; UMP biosynthesis via de novo pathway; UMP from orotate: step 1/2. Its function is as follows. Catalyzes the transfer of a ribosyl phosphate group from 5-phosphoribose 1-diphosphate to orotate, leading to the formation of orotidine monophosphate (OMP). The sequence is that of Orotate phosphoribosyltransferase from Actinobacillus pleuropneumoniae serotype 5b (strain L20).